Reading from the N-terminus, the 412-residue chain is Serine hydroxymethyltransferase (412 aa).

(6S)-5,6,7,8-tetrahydrofolate contacts are provided by residues Leu121 and 125 to 127; that span reads GHL. Position 230 is an N6-(pyridoxal phosphate)lysine (Lys230). Residue 353–355 participates in (6S)-5,6,7,8-tetrahydrofolate binding; the sequence is TPF.

Belongs to the SHMT family. Homodimer. Requires pyridoxal 5'-phosphate as cofactor.

It is found in the cytoplasm. It catalyses the reaction (6R)-5,10-methylene-5,6,7,8-tetrahydrofolate + glycine + H2O = (6S)-5,6,7,8-tetrahydrofolate + L-serine. It functions in the pathway one-carbon metabolism; tetrahydrofolate interconversion. It participates in amino-acid biosynthesis; glycine biosynthesis; glycine from L-serine: step 1/1. Functionally, catalyzes the reversible interconversion of serine and glycine with tetrahydrofolate (THF) serving as the one-carbon carrier. This reaction serves as the major source of one-carbon groups required for the biosynthesis of purines, thymidylate, methionine, and other important biomolecules. Also exhibits THF-independent aldolase activity toward beta-hydroxyamino acids, producing glycine and aldehydes, via a retro-aldol mechanism. The chain is Serine hydroxymethyltransferase from Finegoldia magna (strain ATCC 29328 / DSM 20472 / WAL 2508) (Peptostreptococcus magnus).